A 36-amino-acid polypeptide reads, in one-letter code: Cytochrome b6-f complex subunit 5 (36 aa).

A helical transmembrane segment spans residues 5–25; sequence LLAGIVLGLVPVTLAGLFVAA.

The protein belongs to the PetG family. The 4 large subunits of the cytochrome b6-f complex are cytochrome b6, subunit IV (17 kDa polypeptide, PetD), cytochrome f and the Rieske protein, while the 4 small subunits are PetG, PetL, PetM and PetN. The complex functions as a dimer.

It localises to the cellular thylakoid membrane. Component of the cytochrome b6-f complex, which mediates electron transfer between photosystem II (PSII) and photosystem I (PSI), cyclic electron flow around PSI, and state transitions. PetG is required for either the stability or assembly of the cytochrome b6-f complex. The protein is Cytochrome b6-f complex subunit 5 of Acaryochloris marina (strain MBIC 11017).